Here is a 164-residue protein sequence, read N- to C-terminus: Peptide deformylase-like (164 aa).

Residue E133 is part of the active site.

It belongs to the polypeptide deformylase family.

The polypeptide is Peptide deformylase-like (Agrobacterium fabrum (strain C58 / ATCC 33970) (Agrobacterium tumefaciens (strain C58))).